Reading from the N-terminus, the 173-residue chain is MSNKASDQSARTASILKTDITRENTITRSSSSNNDNYHHHNNINNYNESAKTGEDANKENIPNLEEEIAAFRIFRKKSTSNLKSSHTTSNLVKKTMFKRDLLKQDPKRKLQLQQRFASPTDRLVSPCSLKLNEHKVKMFGKKKKVNPMKLNFKGNLAADSEDVEIDEDEEYFY.

Residues 1–12 (MSNKASDQSART) show a composition bias toward polar residues. Residues 1-56 (MSNKASDQSARTASILKTDITRENTITRSSSSNNDNYHHHNNINNYNESAKTGEDA) form a disordered region. Residue S2 is modified to N-acetylserine. A phosphoserine mark is found at S118 and S125. The segment at 159–173 (DSEDVEIDEDEEYFY) is negative-charged tail.

Its function is as follows. It is required for meiosis I chromosome division during sporulation. A component of the FEAR (CDC14 early anaphase release) network which promotes CDC14 release from the nucleolus during early anaphase. This chain is Sporulation-specific protein 12 (SPO12), found in Saccharomyces cerevisiae (strain ATCC 204508 / S288c) (Baker's yeast).